Reading from the N-terminus, the 190-residue chain is R46 site-specific recombinase (190 aa).

The 136-residue stretch at 2–137 (RLFGYARVST…EGRQEAKLKG (136 aa)) folds into the Resolvase/invertase-type recombinase catalytic domain. Catalysis depends on Ser10, which acts as the O-(5'-phospho-DNA)-serine intermediate. A DNA-binding region (H-T-H motif) is located at residues 161-180 (ATDIARRLSIARSTVYKILE).

The protein belongs to the site-specific recombinase resolvase family.

In terms of biological role, site-specific recombination protein. This is R46 site-specific recombinase (tnpR) from Escherichia coli.